We begin with the raw amino-acid sequence, 356 residues long: Stomatin-like protein 2, mitochondrial (356 aa).

The N-terminal 28 residues, 1-28 (MLARAARGTGALLLKGSVQASARAPRRA), are a transit peptide targeting the mitochondrion. Position 17 is a phosphoserine; by PKC/PRKCZ (Ser-17). At Tyr-124 the chain carries Phosphotyrosine. Lys-145 bears the N6-acetyllysine; alternate mark. Lys-145 is subject to N6-succinyllysine; alternate. Residues 215–252 (INVAEGKKQAQILASEAEKAEQINQAAGEASAVLAKAK) adopt a coiled-coil conformation. An N6-acetyllysine modification is found at Lys-233. Residues 326-356 (EAQDSVSSRSSRDVRSTDASLDEELDRVKLS) are disordered. Ser-330 is modified (phosphoserine).

This sequence belongs to the band 7/mec-2 family. As to quaternary structure, forms homooligomers. Interacts with MFN2; may form heterooligomers with this mediator of mitochondrial fusion. Interacts with PHB1 and PHB2; stabilizes and recruits them to cardiolipin-enriched mitochondrial membranes. Interacts with CACNA2D2.

Its subcellular location is the cell membrane. It is found in the mitochondrion. The protein localises to the mitochondrion inner membrane. The protein resides in the mitochondrion intermembrane space. It localises to the membrane raft. Its subcellular location is the cytoplasm. It is found in the cytoskeleton. Mitochondrial protein that probably regulates the biogenesis and the activity of mitochondria. Stimulates cardiolipin biosynthesis, binds cardiolipin-enriched membranes where it recruits and stabilizes some proteins including prohibitin and may therefore act in the organization of functional microdomains in mitochondrial membranes. Through regulation of the mitochondrial function may play a role into several biological processes including cell migration, cell proliferation, T-cell activation, calcium homeostasis and cellular response to stress. May play a role in calcium homeostasis through negative regulation of calcium efflux from mitochondria. Required for mitochondrial hyperfusion a pro-survival cellular response to stress which results in increased ATP production by mitochondria. May also regulate the organization of functional domains at the plasma membrane and play a role in T-cell activation through association with the T-cell receptor signaling complex and its regulation. In Bos taurus (Bovine), this protein is Stomatin-like protein 2, mitochondrial (STOML2).